Consider the following 272-residue polypeptide: Putative hydro-lyase BRADO2538 (272 aa).

Belongs to the D-glutamate cyclase family.

The protein is Putative hydro-lyase BRADO2538 of Bradyrhizobium sp. (strain ORS 278).